The primary structure comprises 89 residues: Putative defensin-like protein 254 (89 aa).

Positions 1-20 are cleaved as a signal peptide; it reads MHNISFKLLLLCDLFLSSSS. 2 disulfide bridges follow: Cys31/Cys48 and Cys37/Cys55.

This sequence belongs to the DEFL family.

The protein localises to the secreted. The chain is Putative defensin-like protein 254 from Arabidopsis thaliana (Mouse-ear cress).